Reading from the N-terminus, the 397-residue chain is 2-oxoglutarate and iron-dependent oxygenase domain-containing protein ICU11 (397 aa).

A disordered region spans residues 1–56 (MCNQTPLRSMALDSSGKQPEQQQQQQPRASSGNGEARLKLRRTPNEEHEPENYEDL). Over residues 18 to 27 (QPEQQQQQQP) the composition is skewed to low complexity. One can recognise a Fe2OG dioxygenase domain in the interval 238 to 339 (SLDSHHGYIV…RANLILWCRS (102 aa)). Fe cation is bound by residues His260, Asp262, and His320. Arg330 is a 2-oxoglutarate binding site.

Fe(2+) is required as a cofactor. L-ascorbate serves as cofactor. Expressed in roots, cotyledons, rosette leaves, cauline leaves and inflorescences.

It is found in the nucleus. Its subcellular location is the nucleoplasm. Functionally, participates in the epigenetic repression of flowering genes in association with CP2. Functions in the repression of several members of the MADS-box transcription factors family, including SEP3, during vegetative development via histone modification. The chain is 2-oxoglutarate and iron-dependent oxygenase domain-containing protein ICU11 from Arabidopsis thaliana (Mouse-ear cress).